The following is a 938-amino-acid chain: MSDYKNTLNLPETGFPMRGDLAKREPDMLKRWYEQDLYGIIRAAKKGKKTFILHDGPPYANGNIHIGHSVNKILKDIIVKSKGMAGYDSPYIPGWDCHGLPIELKVEQLIGKPGEKVSAAEFRTACRKYAAEQVEGQKKDFIRLGVLGDWDHPYLTMDFKTEANIIRALSKIIDNGHLHKGAKPVHWCTDCGSSLAEAEVEYYDKTSQSIDVRFNAVDTATVAAKFGVSVVNGPISLVIWTTTPWTLPANRAISLNAEYLYQLVQVEGECLILAADLVESVMKRAGITQWAVLGSCTGSDLELLRFTHPFMGFDVPAILGEHVTLDAGTGAVHTAPGHGPDDFVIGQKYGLEVANPVGPNGCYLAGTYPTLDGLFVFKANDVVVELLREKGALLHVEKLLHSYPCCWRHKTPIIFRATPQWFISMDQKGLRKQSLQEIKDVQWIPDWGQARIETMVANRPDWCISRQRTWGVPMSLFVHKETEQLHPRSIELMEEVAKRVEQDGIQAWWDLDPAEILGADAADYVKVPDTLDVWFDSGSTHSSVVDARPEFGGHSPDMYLEGSDQHRGWFMSSLMIATAMKGKAPYRQVLTHGFTVDGQGRKMSKSIGNTISPQDVMNKLGGDILRLWVASTDYTGEIAVSDEILKRSADSYRRIRNTARFLLANLNGFDPAQHQVKPEEMVVVDRWAVGRAQAAQAEIMEAYENYDFHLVVQRLMQFCSVEMGSFYLDIIKDRQYTAKGDGIARRSCQTALFHIAEALVRWMAPIMSFTADEIWNHLPGERQQYVFTEEWYDGLFGLAGNESMNDTFWAELLKVRGEVNKVLEQARSDKRIGGSLEAAVTLYAEPELAARLNSLQDELRFVLLTSAAKVAAYADAGNDAQQSELIAGLKITFNKADGEKCPRCWHYTQDVGLVAEHAELCGRCVTNVAGDGEERKFA.

A 'HIGH' region motif is present at residues 58–68 (PYANGNIHIGH). Residue Glu561 coordinates L-isoleucyl-5'-AMP. The short motif at 602–606 (KMSKS) is the 'KMSKS' region element. Residue Lys605 coordinates ATP. Residues Cys901, Cys904, Cys921, and Cys924 each coordinate Zn(2+).

The protein belongs to the class-I aminoacyl-tRNA synthetase family. IleS type 1 subfamily. Monomer. It depends on Zn(2+) as a cofactor.

It localises to the cytoplasm. It catalyses the reaction tRNA(Ile) + L-isoleucine + ATP = L-isoleucyl-tRNA(Ile) + AMP + diphosphate. Its function is as follows. Catalyzes the attachment of isoleucine to tRNA(Ile). As IleRS can inadvertently accommodate and process structurally similar amino acids such as valine, to avoid such errors it has two additional distinct tRNA(Ile)-dependent editing activities. One activity is designated as 'pretransfer' editing and involves the hydrolysis of activated Val-AMP. The other activity is designated 'posttransfer' editing and involves deacylation of mischarged Val-tRNA(Ile). This Yersinia pseudotuberculosis serotype O:1b (strain IP 31758) protein is Isoleucine--tRNA ligase.